The chain runs to 697 residues: Choline transporter-like protein 2 (697 aa).

Residues 1-30 (MDMEEKPKYGEPRKFDPSFKGPIQNRGCTD) are Cytoplasmic-facing. A helical transmembrane segment spans residues 31–51 (IVCCIIFIIAILGYLAVGILA). At 52–226 (WTHGDPRKVI…KIFEDYTKSW (175 aa)) the chain is on the extracellular side. 2 N-linked (GlcNAc...) asparagine glycosylation sites follow: asparagine 113 and asparagine 204. The chain crosses the membrane as a helical span at residues 227 to 247 (YWILICLLIAVVLSLIFIVLL). Topologically, residues 248 to 249 (RF) are cytoplasmic. Residues 250–270 (LAGVMVWVMILMVVAVIAYGI) traverse the membrane as a helical segment. At 271–309 (AHCSIKYVSLKDTPGSNITLQQLGFQPDFAVYLHIRQTW) the chain is on the extracellular side. Residue asparagine 287 is glycosylated (N-linked (GlcNAc...) asparagine). Residues 310–330 (LAFIIILAILELIIILLLIFL) form a helical membrane-spanning segment. Residues 331-353 (RNRIRVAVELMKEASRAIGYVMS) are Cytoplasmic-facing. The helical transmembrane segment at 354–374 (SLVFPIFTFFLLAIVIAFWGV) threads the bilayer. The Extracellular portion of the chain corresponds to 375-435 (NAVFLSTSSE…YGGETPYHKY (61 aa)). Residues asparagine 391 and asparagine 406 are each glycosylated (N-linked (GlcNAc...) asparagine). The chain crosses the membrane as a helical span at residues 436–456 (LILLQFYNVFLFFWCANFVTA). Over 457-498 (LGQMTLAGAFASYYWAFDKSKDMPAFPLCASLGRSLRYHTGS) the chain is Cytoplasmic. Residues 499 to 519 (LAFGSLLLAIVQVIRVLLEYI) traverse the membrane as a helical segment. At 520-593 (DHKLKGAENK…RVVVLDKVTD (74 aa)) the chain is on the extracellular side. Residues 594 to 614 (FILFLGKLLIVGLVGIFAFFF) form a helical membrane-spanning segment. The Cytoplasmic portion of the chain corresponds to 615–632 (FSGQTDAFKGTAPSLHYY). A helical membrane pass occupies residues 633–653 (WVPILTVLVCSYLIAHGFFSV). The Extracellular segment spans residues 654 to 697 (YAMCVDTLFLCFLEDLERNDGSAERPYLMSENLLNVLKKKNQAN).

It belongs to the CTL (choline transporter-like) family.

It is found in the cell membrane. The protein resides in the mitochondrion outer membrane. The enzyme catalyses choline(out) + n H(+)(in) = choline(in) + n H(+)(out). It carries out the reaction ethanolamine(out) + n H(+)(in) = ethanolamine(in) + n H(+)(out). Choline/H+ antiporter, mainly in mitochodria. Also acts as a low-affinity ethanolamine/H+ antiporter, regulating the supply of extracellular ethanolamine (Etn) for the CDP-Etn pathway, redistribute intracellular Etn and balance the CDP-Cho and CDP-Etn arms of the Kennedy pathway. This is Choline transporter-like protein 2 (slc44a2) from Danio rerio (Zebrafish).